The primary structure comprises 165 residues: Ribosome maturation factor RimM (165 aa).

One can recognise a PRC barrel domain in the interval Glu-94–Ile-165.

The protein belongs to the RimM family. Binds ribosomal protein uS19.

The protein localises to the cytoplasm. In terms of biological role, an accessory protein needed during the final step in the assembly of 30S ribosomal subunit, possibly for assembly of the head region. Essential for efficient processing of 16S rRNA. May be needed both before and after RbfA during the maturation of 16S rRNA. It has affinity for free ribosomal 30S subunits but not for 70S ribosomes. The chain is Ribosome maturation factor RimM from Rickettsia felis (strain ATCC VR-1525 / URRWXCal2) (Rickettsia azadi).